A 351-amino-acid polypeptide reads, in one-letter code: tRNA-splicing endonuclease (351 aa).

Catalysis depends on residues Tyr287, His298, and Lys329.

It belongs to the tRNA-intron endonuclease family. Archaeal long subfamily. As to quaternary structure, homodimer.

The enzyme catalyses pretRNA = a 3'-half-tRNA molecule with a 5'-OH end + a 5'-half-tRNA molecule with a 2',3'-cyclic phosphate end + an intron with a 2',3'-cyclic phosphate and a 5'-hydroxyl terminus.. Endonuclease that removes tRNA introns. Cleaves pre-tRNA at the 5'- and 3'-splice sites to release the intron. The products are an intron and two tRNA half-molecules bearing 2',3' cyclic phosphate and 5'-OH termini. Recognizes a pseudosymmetric substrate in which 2 bulged loops of 3 bases are separated by a stem of 4 bp. In Methanococcoides burtonii (strain DSM 6242 / NBRC 107633 / OCM 468 / ACE-M), this protein is tRNA-splicing endonuclease.